Here is a 712-residue protein sequence, read N- to C-terminus: MEMFTFLLTCVFLPFVRGHSLFTCEPITVPRCMKMAYNMTFFPNLMRHYDQSTAAVKMEPFLPLANLECSPNIETFLCKAFVPACTDQINVVPPCRKFCEKVYSDCKKLIDTFGMRWPEELECDRLQYCDETVPVTFDPHTQFLGPQKNTEQVQRDIGFWCPRHLKTSGGQGYKFLGIDQCAPPCPNMYFKSDELEFAKSFIGIVSIFCLCATLFTFLTFLIDVKRFRYPERPIIYYSVCYSIVSLMYFIGFLLGDRTACNKADEKLELGDTVVLGSQNKACTVLFMFLYFFTMAGTVWWVILTITWFLAAGRKWSCEAIEQKAVWFHAVAWGIPGFLTVMLLAMNKVEGDNISGVCFVGLYDLDASRYFVLLPLCLCVFVGLSLLLAGIISLNHVRQVIQHDGRNQEKLKKFMIRIGVFSGLYLVPLVTLLGCYVYEQVNRITWEITWVSDHCRQYHIPCPYQAKTETRPELALFMIKYLMTLIVGISAVFWVGSKKTCTEWAGFFKRNRKRDPISESRRVLQESCEFFLKHNSKVKHKKKHYKPSSHKLKVISKSMGTSTGATANHGTSAVAITNHDYLGQETLTEIQTSPETSVREVRADGASTPRSREQDCGEPASPAASSSRLCEEQADRKGRAGNGTDKISISESTRSEGRVTPKSDVTETGPMQSSSLQVPGSSEPGSLKGSTSLLVHSASGGRKEHGTGSHSDT.

A signal peptide spans 1-18 (MEMFTFLLTCVFLPFVRG). The FZ domain maps to 19-132 (HSLFTCEPIT…CDRLQYCDET (114 aa)). The Extracellular portion of the chain corresponds to 19–201 (HSLFTCEPIT…SDELEFAKSF (183 aa)). 5 disulfide bridges follow: C24–C85, C32–C78, C69–C106, C95–C129, and C99–C123. N-linked (GlcNAc...) asparagine glycosylation occurs at N38. The chain crosses the membrane as a helical span at residues 202 to 222 (IGIVSIFCLCATLFTFLTFLI). Topologically, residues 223–233 (DVKRFRYPERP) are cytoplasmic. Residues 234 to 254 (IIYYSVCYSIVSLMYFIGFLL) traverse the membrane as a helical segment. Over 255-284 (GDRTACNKADEKLELGDTVVLGSQNKACTV) the chain is Extracellular. A helical membrane pass occupies residues 285 to 305 (LFMFLYFFTMAGTVWWVILTI). The Cytoplasmic segment spans residues 306–324 (TWFLAAGRKWSCEAIEQKA). The chain crosses the membrane as a helical span at residues 325–345 (VWFHAVAWGIPGFLTVMLLAM). The Extracellular portion of the chain corresponds to 346–370 (NKVEGDNISGVCFVGLYDLDASRYF). N352 carries an N-linked (GlcNAc...) asparagine glycan. The chain crosses the membrane as a helical span at residues 371 to 391 (VLLPLCLCVFVGLSLLLAGII). Residues 392–416 (SLNHVRQVIQHDGRNQEKLKKFMIR) are Cytoplasmic-facing. A helical transmembrane segment spans residues 417-437 (IGVFSGLYLVPLVTLLGCYVY). Residues 438–473 (EQVNRITWEITWVSDHCRQYHIPCPYQAKTETRPEL) are Extracellular-facing. Residues 474-494 (ALFMIKYLMTLIVGISAVFWV) traverse the membrane as a helical segment. The Cytoplasmic portion of the chain corresponds to 495 to 712 (GSKKTCTEWA…EHGTGSHSDT (218 aa)). The Lys-Thr-X-X-X-Trp motif, mediates interaction with the PDZ domain of Dvl family members motif lies at 498 to 503 (KTCTEW). Residues 588-712 (EIQTSPETSV…EHGTGSHSDT (125 aa)) form a disordered region. 2 stretches are compositionally biased toward basic and acidic residues: residues 628-637 (LCEEQADRKG) and 652-664 (TRSE…KSDV). Polar residues predominate over residues 668–693 (GPMQSSSLQVPGSSEPGSLKGSTSLL). Over residues 700–712 (GRKEHGTGSHSDT) the composition is skewed to basic and acidic residues.

Belongs to the G-protein coupled receptor Fz/Smo family. In terms of assembly, interacts with LMBR1L. Post-translationally, ubiquitinated by ZNRF3, leading to its degradation by the proteasome.

The protein resides in the membrane. It localises to the cell membrane. The protein localises to the cell surface. It is found in the apical cell membrane. Its subcellular location is the cytoplasmic vesicle membrane. The protein resides in the endoplasmic reticulum membrane. Receptor for Wnt proteins. Most of frizzled receptors are coupled to the beta-catenin canonical signaling pathway, which leads to the activation of disheveled proteins, inhibition of GSK-3 kinase, nuclear accumulation of beta-catenin and activation of Wnt target genes. A second signaling pathway involving PKC and calcium fluxes has been seen for some family members, but it is not yet clear if it represents a distinct pathway or if it can be integrated in the canonical pathway, as PKC seems to be required for Wnt-mediated inactivation of GSK-3 kinase. Both pathways seem to involve interactions with G-proteins. Activation by Wnt5A stimulates PKC activity via a G-protein-dependent mechanism. Involved in transduction and intercellular transmission of polarity information during tissue morphogenesis and/or in differentiated tissues. Together with FZD3, is involved in the neural tube closure and plays a role in the regulation of the establishment of planar cell polarity (PCP), particularly in the orientation of asymmetric bundles of stereocilia on the apical faces of a subset of auditory and vestibular sensory cells located in the inner ear. The chain is Frizzled-6 (FZD6) from Canis lupus familiaris (Dog).